Reading from the N-terminus, the 194-residue chain is Fe/S biogenesis protein NfuA (194 aa).

2 residues coordinate [4Fe-4S] cluster: C152 and C155.

It belongs to the NfuA family. As to quaternary structure, homodimer. Requires [4Fe-4S] cluster as cofactor.

In terms of biological role, involved in iron-sulfur cluster biogenesis. Binds a 4Fe-4S cluster, can transfer this cluster to apoproteins, and thereby intervenes in the maturation of Fe/S proteins. Could also act as a scaffold/chaperone for damaged Fe/S proteins. The chain is Fe/S biogenesis protein NfuA from Ectopseudomonas mendocina (strain ymp) (Pseudomonas mendocina).